Consider the following 159-residue polypeptide: Capsid protein (159 aa).

An N-acetylserine; by host modification is found at Ser-2.

Belongs to the virgaviridae capsid protein family.

Its subcellular location is the virion. In terms of biological role, capsid protein self-assembles to form rod-shaped virions about 18 nm in diameter with a central canal enclosing the viral genomic RNA. The protein is Capsid protein (CP) of Nicotiana tabacum (Common tobacco).